Here is a 219-residue protein sequence, read N- to C-terminus: Orotate phosphoribosyltransferase (219 aa).

Position 26 (Lys26) interacts with 5-phospho-alpha-D-ribose 1-diphosphate. Residue 34–35 coordinates orotate; it reads FF. 5-phospho-alpha-D-ribose 1-diphosphate contacts are provided by residues 72-73, Arg98, Lys99, Lys102, His104, and 124-132; these read YK and DDVITAGTA. Positions 128 and 156 each coordinate orotate.

This sequence belongs to the purine/pyrimidine phosphoribosyltransferase family. PyrE subfamily. In terms of assembly, homodimer. It depends on Mg(2+) as a cofactor.

The enzyme catalyses orotidine 5'-phosphate + diphosphate = orotate + 5-phospho-alpha-D-ribose 1-diphosphate. It participates in pyrimidine metabolism; UMP biosynthesis via de novo pathway; UMP from orotate: step 1/2. Catalyzes the transfer of a ribosyl phosphate group from 5-phosphoribose 1-diphosphate to orotate, leading to the formation of orotidine monophosphate (OMP). This Xylella fastidiosa (strain 9a5c) protein is Orotate phosphoribosyltransferase.